Reading from the N-terminus, the 207-residue chain is Coiled-coil domain-containing protein 25 (207 aa).

Over 1 to 104 the chain is Extracellular; sequence MVFYFTSAVV…SNLKKTADMD (104 aa). The tract at residues 20–24 is DNA-binding; it reads KDKYE. The helical transmembrane segment at 105–121 threads the bilayer; it reads IGQIGFHRQKEVKIVAV. Residues 112-189 adopt a coiled-coil conformation; sequence RQKEVKIVAV…EDLKNYTSLM (78 aa). At 122–207 the chain is on the cytoplasmic side; that stretch reads EKKINEIVNR…EDGYDSDDFM (86 aa). Positions 140–183 are enriched in basic and acidic residues; it reads YPDLAAEKESRDREERNEKKAQIQEQKKKEKEEVKKKKEMEDLK. The interval 140-207 is disordered; sequence YPDLAAEKES…EDGYDSDDFM (68 aa). Residues 184-198 show a composition bias toward polar residues; it reads NYTSLMKSDNMTTNE. A Phosphoserine modification is found at Ser203.

The protein belongs to the CCDC25 family. As to quaternary structure, interacts (via cytoplasmic region) with ILK.

The protein localises to the cell membrane. It localises to the endomembrane system. In terms of biological role, transmembrane receptor that senses neutrophil extracellular traps (NETs) and triggers the ILK-PARVB pathway to enhance cell motility. NETs are mainly composed of DNA fibers and are released by neutrophils to bind pathogens during inflammation. Specifically binds NETs on its extracellular region, in particular the 8-OHdG-enriched DNA present in NETs, and recruits ILK, initiating the ILK-PARVB cascade to induce cytoskeleton rearrangement and directional migration of cells. The protein is Coiled-coil domain-containing protein 25 of Danio rerio (Zebrafish).